The following is an 808-amino-acid chain: MAKTLLHGTLHVTIFEVDHLKAGSVVVFSESLRRTLRKPLVLAKGTPKIYASIDLDKARVGRTRMIENEPNNPKWNESFHIYCGHPSTNVIFTVKDDNPIGATLIGRAYLPVHELLEGEEVDKWVEILDEDKNPISEGSKIHVKLQYFDITQDRNWAHGIRSSKFPGVPYTFFSQRPGCRISLYQDAHVPDNFVPKIPLSGGKFYEPHRCWEDVFDAITNAKHFIYITGWSVYTEFALIRDTRRPKPGGDIMLGELLKKKADEGVRVLMLVWDDRTSVGLLKKDGLMATHDQETEEYFRDSNVHCVLCLRNPDDGGGIIQGLTISTIFTHHQKIVVVDSEMPTSGSENRRVVSFVGGIDLCDGRYDTPFHSLFRTLDTAHHDDFHQPNFEGAAITKGGPREPWHDIHSRLEGPVAWDVLFNFEQRWRKQGGKDILLNLRELQDVIIPPSPVTFPDDDETWNVQLFRSIDEGAAFFFPQTPEEAAKAGLVSGKENIIVRSIQDAYIHAIRGPKISFILKISIFLEALLAGIQRILKMRTSVLCILIPKELSLKIVSKIEAGKRFTVYVVLPMWPEGIPESGSVQAILDWQRRTMEMMYKDIIQALQANGIEEDPRNYLTFFCLGNREVKRDGEYEPSEKPDPDTDYSRAQESRRFMIYVHAKMMIVDDEYIIIGSANINQRSMDGAKDSEIAMGAYQPHHLATREPARGQIHGFRMSLWYEHLGMLDDTLALPESVDCVQKVNTVADKYWDLYSSETLENDLPGHLLRYPIAVASEGNVTELPGTEFFPDTKARVLGAKSDFLPPILTT.

Residues 1–125 (MAKTLLHGTL…LEGEEVDKWV (125 aa)) enclose the C2 domain. Asp-186 contacts Ca(2+). In terms of domain architecture, PLD phosphodiesterase 1 spans 326-364 (TIFTHHQKIVVVDSEMPTSGSENRRVVSFVGGIDLCDGR). Residues His-331, Lys-333, and Asp-338 contribute to the active site. His-331 lines the a 1,2-diacyl-sn-glycero-3-phosphate pocket. Residues His-370 and His-404 each coordinate Ca(2+). In terms of domain architecture, PLD phosphodiesterase 2 spans 654–681 (FMIYVHAKMMIVDDEYIIIGSANINQRS). Residues His-659, Lys-661, and Asp-666 contribute to the active site. Position 659 (His-659) interacts with a 1,2-diacyl-sn-glycero-3-phosphate. Glu-720 contacts Ca(2+).

Belongs to the phospholipase D family. C2-PLD subfamily. Ca(2+) serves as cofactor.

It carries out the reaction a 1,2-diacyl-sn-glycero-3-phosphocholine + H2O = a 1,2-diacyl-sn-glycero-3-phosphate + choline + H(+). Functionally, hydrolyzes glycerol-phospholipids at the terminal phosphodiesteric bond. Plays an important role in various cellular processes. In Spuriopimpinella brachycarpa (Chamnamul), this protein is Phospholipase D alpha 1 (PLD1).